An 879-amino-acid chain; its full sequence is DNA mismatch repair protein MutS (879 aa).

629 to 636 (GPNMAGKS) is an ATP binding site. The segment at 824 to 845 (VGGQPQKELSEHKPHQPSLFAP) is disordered.

This sequence belongs to the DNA mismatch repair MutS family.

This protein is involved in the repair of mismatches in DNA. It is possible that it carries out the mismatch recognition step. This protein has a weak ATPase activity. The protein is DNA mismatch repair protein MutS of Desulfotalea psychrophila (strain LSv54 / DSM 12343).